The chain runs to 278 residues: Fe(II)/2-oxoglutarate-dependent dioxygenase nvfI (278 aa).

The protein belongs to the asaB hydroxylase/desaturase family.

The catalysed reaction is asnovolin A + 2-oxoglutarate + 2 O2 = fumigatonoid A + succinate + CO2. The protein operates within secondary metabolite biosynthesis; terpenoid biosynthesis. In terms of biological role, fe(II)/2-oxoglutarate-dependent dioxygenase; part of the gene cluster that mediates the biosynthesis of novofumigatonin, a heavily oxygenated meroterpenoid containing a unique orthoester moiety. The first step of the pathway is the synthesis of 3,5-dimethylorsellinic acid (DMOA) by the polyketide synthase nvfA via condensation of one acetyl-CoA starter unit with 3 malonyl-CoA units and 2 methylations. DMOA is then converted to farnesyl-DMOA by the farnesyltransferase nvfB. Epoxydation by FAD-dependent monooxygenase nvfK, followed by a protonation-initiated cyclization catalyzed by the terpene cyclase nvfL leads to the production of asnavolin H. The short chain dehydrogenase nvfC then as a 3-OH dehydrogenase of asnovolin H to yield chemesin D. There are two branches to synthesize asnovolin A from chemesin D. In one branch, chemesin D undergoes Baeyer-Villiger oxidation by nvfH, methylation by nvfJ, and enoyl reduction by the nvfM D enoylreductase that reduces the double bond between C-5'and C-6', to form respectively asnovolin I, asnovolin K, and asnovolin A. In the other branch, the methylation precedes the Baeyer-Villiger oxidation and the enoyl reduction to yield asnovolin A via the asnovolin J intermediate. Asnovolin A is further converted to fumigatonoid A by the Fe(II)/2-oxoglutarate-dependent dioxygenase nvfI that catalyzes an endoperoxidation reaction. The alpha/beta hydrolase nvfD then acts as an epimerase that converts fumigatonoid A to its C-5' epimer, which then undergoes spontaneous or nvfD-catalyzed lactonization. The following step utilizes the ketoreductase nvfG to produce fumigatonoid B. The dioxygenase nvfE further converts fumigatonoid B into fumigatonoid C. Finally the Fe(II)/2-oxoglutarate-dependent dioxygenase nvfF catalyzes two rounds of oxidation to transform fumigatonoid C into the end product, novofumigatonin A. In Aspergillus novofumigatus (strain IBT 16806), this protein is Fe(II)/2-oxoglutarate-dependent dioxygenase nvfI.